We begin with the raw amino-acid sequence, 1009 residues long: Glutamate receptor ionotropic, delta-1 (1009 aa).

The signal sequence occupies residues 1 to 20 (MEALTLWLLPWICQCVTVRA). The segment at 21-436 (DSIIHIGAIF…ERPMGSRLQG (416 aa)) is interaction with CBLN1. Residues 21-562 (DSIIHIGAIF…SIFSLFAPFD (542 aa)) are Extracellular-facing. 3 cysteine pairs are disulfide-bonded: Cys80–Cys351, Cys96–Cys128, and Cys294–Cys306. 2 N-linked (GlcNAc...) asparagine glycosylation sites follow: Asn131 and Asn200. N-linked (GlcNAc...) asparagine glycosylation is found at Asn422 and Asn498. Ca(2+) contacts are provided by Glu527, Val530, and Asp531. The chain crosses the membrane as a helical span at residues 563–583 (FAVWACIAAAIPVVGVLIFVL). Residues 584–637 (NRIQAVRSQSATQPRPSASATLHSAIWIVYGAFVQQGGESSVNSVAMRIVMGSW) lie on the Cytoplasmic side of the membrane. A helical membrane pass occupies residues 638–658 (WLFTLIVCSSYTANLAAFLTV). Topologically, residues 659 to 830 (SRMDNPIRTF…TEGKSLKLHS (172 aa)) are extracellular. Residues Asp753, Asp755, and Ser757 each coordinate Ca(2+). A helical membrane pass occupies residues 831 to 851 (FAGVFCILAIGLLLACLVAAL). Over 852–1009 (ELWWNSNRCH…ALDTSHGTSI (158 aa)) the chain is Cytoplasmic. The segment covering 931–942 (LPEQSSHGTSRT) has biased composition (polar residues). The interval 931–960 (LPEQSSHGTSRTLSSGPSSNLPLPLSSSAT) is disordered. Low complexity predominate over residues 943 to 958 (LSSGPSSNLPLPLSSS).

The protein belongs to the glutamate-gated ion channel (TC 1.A.10.1) family. GRID1 subfamily. Homodimer. Interacts (via extracellular N-terminal domain) with CBLN1 (via C1q domain), and more weakly with CBLN2; the interactions mediate the trans-synaptic adhesion complexes also with neurexins and are required for ligand-gated cation channel activity. As to expression, equally in forebrain and cerebellum.

Its subcellular location is the postsynaptic cell membrane. The enzyme catalyses Ca(2+)(in) = Ca(2+)(out). It carries out the reaction Na(+)(in) = Na(+)(out). In terms of biological role, member of the ionotropic glutamate receptor family, which plays a crucial role in synaptic organization and signal transduction in the central nervous system. Although it shares structural features with ionotropic glutamate receptors, does not bind glutamate as a primary ligand. Instead, forms trans-synaptic adhesion complexes with presynaptic neurexins and cerebellins, regulating NMDA and AMPA receptor activity and influencing synaptic plasticity through signal transduction. In the presence of NRX1B-CBLN1, forms cation-selective channels that are proposed to be gated by glycine and D-serine. However, recent research disputes this ligand-gated cation channel activity. Cation-selective ion channel can be triggered by GRM1 in dopaminergic neurons. Also acts as a receptor for GABA, modulating inhibitory synaptic plasticity through non-ionotropic mechanisms. This Mus musculus (Mouse) protein is Glutamate receptor ionotropic, delta-1 (Grid1).